Here is a 480-residue protein sequence, read N- to C-terminus: UDP-glycosyltransferase 72B1 (480 aa).

The Proton acceptor role is filled by H19. D117 serves as the catalytic Charge relay. 4 residues coordinate UDP: S277, W346, A347, and H364. UDP-alpha-D-glucose-binding residues include S277, W346, A347, H364, W367, N368, S369, E372, Y386, E388, and Q389. N368, S369, E372, and Y386 together coordinate UDP.

Belongs to the UDP-glycosyltransferase family.

The catalysed reaction is hydroquinone + UDP-alpha-D-glucose = hydroquinone O-beta-D-glucopyranoside + UDP + H(+). Functionally, bifunctional O-glycosyltransferase and N-glycosyltransferase that can detoxify xenobiotics. Possesses high activity to metabolize the persistent pollutants 2,4,5-trichlorophenol (TCP) and 3,4-dichloroaniline (DCA). Also active on benzoates and benzoate derivatives in vitro. This is UDP-glycosyltransferase 72B1 (UGT72B1) from Arabidopsis thaliana (Mouse-ear cress).